Here is a 307-residue protein sequence, read N- to C-terminus: Cyclin-dependent kinase 5 activator 1 (307 aa).

The N-myristoyl glycine moiety is linked to residue Gly2. Ser8 carries the phosphoserine; by CDK5 modification. A disordered region spans residues 97–135 (TFAQPPPAQPPAPPASQLSGSQTGVSSSVKKAPHPAVSS). Over residues 100–110 (QPPPAQPPAPP) the composition is skewed to pro residues. The span at 112–125 (SQLSGSQTGVSSSV) shows a compositional bias: polar residues. Residue Thr138 is modified to Phosphothreonine; by CDK5.

Belongs to the cyclin-dependent kinase 5 activator family. As to quaternary structure, heterodimer composed of a catalytic subunit CDK5 and a regulatory subunit CDK5R1 (p25) and macromolecular complex composed of at least CDK5, CDK5R1 (p35) and CDK5RAP1 or CDK5RAP2 or CDK5RAP3. Only the heterodimer shows kinase activity. Interacts with EPHA4 and NGEF; may mediate the activation of NGEF by EPHA4. Interacts with RASGRF2. The complex p35/CDK5 interacts with CLOCK. In terms of processing, the p35 form is proteolytically cleaved by calpain, giving rise to the p25 form. P35 has a 5 to 10 fold shorter half-life compared to p25. The conversion results in deregulation of the CDK5 kinase: p25/CDK5 kinase displays an increased and altered tau phosphorylation in comparison to the p35/CDK5 kinase in vivo. Myristoylated. A proper myristoylation signal is essential for the proper distribution of p35. Post-translationally, phosphorylation at Ser-8 and Thr-138 by CDK5 prevents calpain-mediated proteolysis. In terms of processing, ubiquitinated, leading to its degradation: degradation of p35 by proteasome results in down-regulation of CDK5 activity. During this process, CDK5 phosphorylates p35 and induces its ubiquitination and subsequent degradation. Ubiquitinated by the CRL2(FEM1B) complex, which recognizes the -Gly-Leu-Asp-Arg C-degron at the C-terminus, leading to its degradation. As to expression, brain and neuron specific.

It is found in the cell membrane. It localises to the cell projection. Its subcellular location is the neuron projection. The protein resides in the nucleus. The protein localises to the cytoplasm. It is found in the perinuclear region. It localises to the perikaryon. P35 is a neuron specific activator of CDK5. The complex p35/CDK5 is required for neurite outgrowth and cortical lamination. Involved in dendritic spine morphogenesis by mediating the EFNA1-EPHA4 signaling. Activator of TPKII. The complex p35/CDK5 participates in the regulation of the circadian clock by modulating the function of CLOCK protein: phosphorylates CLOCK at 'Thr-451' and 'Thr-461' and regulates the transcriptional activity of the CLOCK-BMAL1 heterodimer in association with altered stability and subcellular distribution. The chain is Cyclin-dependent kinase 5 activator 1 (CDK5R1) from Bos taurus (Bovine).